The chain runs to 449 residues: Na(+)-translocating NADH-quinone reductase subunit A (449 aa).

Belongs to the NqrA family. As to quaternary structure, composed of six subunits; NqrA, NqrB, NqrC, NqrD, NqrE and NqrF.

The catalysed reaction is a ubiquinone + n Na(+)(in) + NADH + H(+) = a ubiquinol + n Na(+)(out) + NAD(+). Its function is as follows. NQR complex catalyzes the reduction of ubiquinone-1 to ubiquinol by two successive reactions, coupled with the transport of Na(+) ions from the cytoplasm to the periplasm. NqrA to NqrE are probably involved in the second step, the conversion of ubisemiquinone to ubiquinol. The protein is Na(+)-translocating NADH-quinone reductase subunit A of Serratia proteamaculans (strain 568).